We begin with the raw amino-acid sequence, 194 residues long: Pyridoxine/pyridoxamine 5'-phosphate oxidase (194 aa).

FMN-binding positions include 42–47 (RVVLLK), 57–58 (FT), arginine 63, lysine 64, and glutamine 86. A substrate-binding site is contributed by lysine 47. Substrate-binding residues include tyrosine 104, arginine 108, and serine 112. FMN contacts are provided by residues 121 to 122 (QS) and tryptophan 166. 172–174 (RIH) provides a ligand contact to substrate. Residue arginine 176 coordinates FMN.

The protein belongs to the pyridoxamine 5'-phosphate oxidase family. As to quaternary structure, homodimer. FMN is required as a cofactor.

The catalysed reaction is pyridoxamine 5'-phosphate + O2 + H2O = pyridoxal 5'-phosphate + H2O2 + NH4(+). It catalyses the reaction pyridoxine 5'-phosphate + O2 = pyridoxal 5'-phosphate + H2O2. The protein operates within cofactor metabolism; pyridoxal 5'-phosphate salvage; pyridoxal 5'-phosphate from pyridoxamine 5'-phosphate: step 1/1. It participates in cofactor metabolism; pyridoxal 5'-phosphate salvage; pyridoxal 5'-phosphate from pyridoxine 5'-phosphate: step 1/1. Functionally, catalyzes the oxidation of either pyridoxine 5'-phosphate (PNP) or pyridoxamine 5'-phosphate (PMP) into pyridoxal 5'-phosphate (PLP). This Ehrlichia ruminantium (strain Welgevonden) protein is Pyridoxine/pyridoxamine 5'-phosphate oxidase.